We begin with the raw amino-acid sequence, 258 residues long: Acyl-[acyl-carrier-protein]--UDP-N-acetylglucosamine O-acyltransferase (258 aa).

The protein belongs to the transferase hexapeptide repeat family. LpxA subfamily. In terms of assembly, homotrimer.

It is found in the cytoplasm. It catalyses the reaction a (3R)-hydroxyacyl-[ACP] + UDP-N-acetyl-alpha-D-glucosamine = a UDP-3-O-[(3R)-3-hydroxyacyl]-N-acetyl-alpha-D-glucosamine + holo-[ACP]. Its pathway is glycolipid biosynthesis; lipid IV(A) biosynthesis; lipid IV(A) from (3R)-3-hydroxytetradecanoyl-[acyl-carrier-protein] and UDP-N-acetyl-alpha-D-glucosamine: step 1/6. Involved in the biosynthesis of lipid A, a phosphorylated glycolipid that anchors the lipopolysaccharide to the outer membrane of the cell. The sequence is that of Acyl-[acyl-carrier-protein]--UDP-N-acetylglucosamine O-acyltransferase from Pseudomonas syringae pv. syringae (strain B728a).